The chain runs to 376 residues: Sulfate/thiosulfate import ATP-binding protein CysA 1 (376 aa).

An ABC transporter domain is found at 3–237; it reads IRLTNISKKF…PNSRFVFDFL (235 aa). Residue 35–42 coordinates ATP; sequence GPSGSGKT.

The protein belongs to the ABC transporter superfamily. Sulfate/tungstate importer (TC 3.A.1.6) family. As to quaternary structure, the complex is composed of two ATP-binding proteins (CysA), two transmembrane proteins (CysT and CysW) and a solute-binding protein (CysP).

It is found in the cell inner membrane. The catalysed reaction is sulfate(out) + ATP + H2O = sulfate(in) + ADP + phosphate + H(+). It catalyses the reaction thiosulfate(out) + ATP + H2O = thiosulfate(in) + ADP + phosphate + H(+). In terms of biological role, part of the ABC transporter complex CysAWTP involved in sulfate/thiosulfate import. Responsible for energy coupling to the transport system. This Shewanella oneidensis (strain ATCC 700550 / JCM 31522 / CIP 106686 / LMG 19005 / NCIMB 14063 / MR-1) protein is Sulfate/thiosulfate import ATP-binding protein CysA 1.